The sequence spans 246 residues: DNA repair protein RecO (246 aa).

It belongs to the RecO family.

Functionally, involved in DNA repair and RecF pathway recombination. This is DNA repair protein RecO from Maridesulfovibrio salexigens (strain ATCC 14822 / DSM 2638 / NCIMB 8403 / VKM B-1763) (Desulfovibrio salexigens).